We begin with the raw amino-acid sequence, 827 residues long: Polyhomeotic-like protein 2 (827 aa).

3 disordered regions span residues 1–78 (MEKE…QYLQ), 282–316 (GLGA…SDLT), and 482–545 (QEPT…PPQA). Low complexity predominate over residues 9–38 (SVASSASVTIPSTTSVSTSTSAGTLSNSSS). The span at 485–498 (TRTELRQSDKESQV) shows a compositional bias: basic and acidic residues. Residues 517-538 (AMTSGSGNNAPTVTGSAPQNGE) show a composition bias toward polar residues. The HD1 motif lies at 540–570 (KPPPQAVVKPQILTHVIEGFVIQEGAEPFPV). An FCS-type zinc finger spans residues 609–643 (NNQPEPVRTCEFCGNVDFAFNFKRSKRFCSTVCAK). Cysteine 618, cysteine 621, cysteine 637, and cysteine 641 together coordinate Zn(2+). The interval 653-730 (MGLFPGKSSP…EPISPLSNSS (78 aa)) is disordered. The segment covering 661–675 (SPEDTKKPKASDESP) has biased composition (basic and acidic residues). Polar residues-rich tracts occupy residues 687–696 (PSIQTTTGAS) and 708–717 (GESSQCSDMS). The region spanning 763-827 (WNVEDVYEFI…FARISMLKDS (65 aa)) is the SAM domain.

In terms of assembly, component of a PRC1-like complex. Isoform 1 expression is stronger at the posterior border than in the anterior region within individual somites; On the contrary, isoform 2 expression is higher at the posterior border.

Its subcellular location is the nucleus. Functionally, component of a Polycomb group (PcG) multiprotein PRC1-like complex, a complex class required to maintain the transcriptionally repressive state of many genes, including Hox genes, throughout development. PcG PRC1 complex acts via chromatin remodeling and modification of histones; it mediates monoubiquitination of histone H2A 'Lys-119', rendering chromatin heritably changed in its expressibility. This is Polyhomeotic-like protein 2 (phc2) from Danio rerio (Zebrafish).